The primary structure comprises 348 residues: Succinylglutamate desuccinylase (348 aa).

Histidine 67, glutamate 70, and histidine 164 together coordinate Zn(2+). Glutamate 228 is a catalytic residue.

It belongs to the AspA/AstE family. Succinylglutamate desuccinylase subfamily. Requires Zn(2+) as cofactor.

It catalyses the reaction N-succinyl-L-glutamate + H2O = L-glutamate + succinate. It participates in amino-acid degradation; L-arginine degradation via AST pathway; L-glutamate and succinate from L-arginine: step 5/5. In terms of biological role, transforms N(2)-succinylglutamate into succinate and glutamate. The sequence is that of Succinylglutamate desuccinylase from Shewanella denitrificans (strain OS217 / ATCC BAA-1090 / DSM 15013).